A 733-amino-acid polypeptide reads, in one-letter code: MIGEKDLAGDGECSRTKTSKPRFSNLNNQTHQDDKTGQYHQKGVDFLNVRSNNLDGGFSSKSSPRSGNELTLSYLCENSGKLAESLGQKGKEVVTFSENSSYDDKWVERDFFNLREMNPNSSKRKAHEEEEEAEEEEDKKSNKIETLNLSLALPDVSLSLTASNAVKRPRVVTSERTTTSFSNDFTATAPSMSYSYSHPFSHNISCSMTRNSTDFDCSVGKDDHIWCAGEGTNGSVHSRFRPIGDGGVALANNPVSGKPSSSADYSFFPSELPARPGNEVTISGDSRKKVANLEDNDAVRSERVLYDIVSKSISSVALIIQGMADETLESAKEYLRNLIDSPEKKEKLVNLQNQIDKRSDLSKETLSKCVKDQLDILVAVRTGLKYFLSGKIRIPMNELVEIFLFLRCRNVNCKSLLPVDDCECKICSNNKGFCSSCMCPVCLRFDSASNTCSWVGCDVCSHWCHAACGIQKNLIKPGHSLKGQRGTTEMMFHCIGCAHKSEMFGFVKDVFVCCAKNWGLETLIKELDCVRKVFRGSDDAKGKALHLKANEMVKKLESKQISPLDASNFIIQFFNYAESIPEIPDPPRELTVAAETSYRKDEASVTPSTSKDQKKKSFALTDAMMNSFDSLESMVRIKEAETRMFQKKADEARIEAESFKRMIEMKTEKMEEEYTEKLARLCLQETEERRRNKLEELKKLENSHCDYRNMKLRMEAEIAGLLKRMEVTRQQLV.

Residues 1-15 are compositionally biased toward basic and acidic residues; the sequence is MIGEKDLAGDGECSR. Disordered regions lie at residues 1 to 42 and 118 to 142; these read MIGE…YHQK and NPNS…KKSN. Residues 21-30 show a composition bias toward polar residues; sequence PRFSNLNNQT. Positions 120–153 form a coiled coil; the sequence is NSSKRKAHEEEEEAEEEEDKKSNKIETLNLSLAL. A PHD-type zinc finger spans residues 436 to 500; that stretch reads SCMCPVCLRF…MFHCIGCAHK (65 aa). A disordered region spans residues 592 to 614; sequence VAAETSYRKDEASVTPSTSKDQK. The stretch at 644–733 forms a coiled coil; it reads MFQKKADEAR…RMEVTRQQLV (90 aa).

In terms of assembly, self-interacts. Interacts with OBE1 and OBE2. Interacts with OBE4.

The protein resides in the nucleus. In terms of biological role, probable transcription factor that functions redundantly with OBE4 in specification of the hypophysis and establishment of the embryonic root. Involved in the activation of ARF5/MP-dependent gene expression during embryonic root meristem initiation. Involved in shoot meristem homeostasis. The sequence is that of Protein OBERON 3 from Arabidopsis thaliana (Mouse-ear cress).